The chain runs to 198 residues: MHPTQRKLMKRIILFLSLLFCIACPAIAGQDIDLVANVKNSTCKSGISNQGNIDLGVVGVGYFSGNVTPESYQPGGKEFTITVSDCALQGTGDVLNQLHIDFRALSGVMAAGSRQIFANEISSGASNVGVVIFSTQDSANTFNVLNASGGSRSVYPVMSDDMNGSSWKFSTRMQKIDPALSVTSGQLMSHVLVDIYYE.

The signal sequence occupies residues 1–28 (MHPTQRKLMKRIILFLSLLFCIACPAIA).

This sequence belongs to the fimbrial protein family.

The protein resides in the fimbrium. Functionally, part of the yadCKLM-htrE-yadVN fimbrial operon. Could contribute to adhesion to various surfaces in specific environmental niches. This is an uncharacterized protein from Escherichia coli (strain K12).